Consider the following 190-residue polypeptide: uncharacterized protein (190 aa).

In terms of domain architecture, HTH tetR-type spans 1–58 (MDKRILAETFRLIKQKGFSFTMNDLAAALGTSKRTLYAYYSSKDQLVEAVVEQFIAEM). A DNA-binding region (H-T-H motif) is located at residues 21 to 40 (TMNDLAAALGTSKRTLYAYY).

This is an uncharacterized protein from Bacillus subtilis (strain 168).